The following is a 273-amino-acid chain: MVKHFAVIGDPIAHSLSPLMHNAGYKALNLAADYQKFQVSPEDLQEAVFGLKALGFSGWNVTVPHKETILPFLDELTEEAVRAGAVNTVKVDKGRLIGHNTDGSGFVRSLQEHMELDECKQIVILGAGGAAKGIAMALAPFGAQLCLMNRTPERGAELVEKILEGGGQARQEPWGRGEWLAQADCVIQTTSIGLKKEEYPFSLAGIRPGTLVVDIIFNPWETPFLHSAKAMGCKTVNGIDMLLYQGVNAWEFWLEDKAPVESMRKALYQALAV.

Residues serine 15–serine 17 and threonine 62 contribute to the shikimate site. Lysine 66 (proton acceptor) is an active-site residue. Residue glutamate 78 coordinates NADP(+). Positions 87 and 102 each coordinate shikimate. Residues glycine 126–alanine 130, asparagine 149–arginine 154, isoleucine 215, and glycine 238 contribute to the NADP(+) site.

Belongs to the shikimate dehydrogenase family. Homodimer.

The enzyme catalyses shikimate + NADP(+) = 3-dehydroshikimate + NADPH + H(+). The protein operates within metabolic intermediate biosynthesis; chorismate biosynthesis; chorismate from D-erythrose 4-phosphate and phosphoenolpyruvate: step 4/7. Its function is as follows. Involved in the biosynthesis of the chorismate, which leads to the biosynthesis of aromatic amino acids. Catalyzes the reversible NADPH linked reduction of 3-dehydroshikimate (DHSA) to yield shikimate (SA). This Desulfitobacterium hafniense (strain Y51) protein is Shikimate dehydrogenase (NADP(+)).